Here is a 630-residue protein sequence, read N- to C-terminus: 1-deoxy-D-xylulose-5-phosphate synthase (630 aa).

Thiamine diphosphate-binding positions include His-72 and 113–115; that span reads GHS. Mg(2+) is bound at residue Asp-144. Thiamine diphosphate is bound by residues 145–146, Asn-173, Tyr-284, and Glu-367; that span reads GA. Asn-173 is a binding site for Mg(2+).

Belongs to the transketolase family. DXPS subfamily. Homodimer. Requires Mg(2+) as cofactor. It depends on thiamine diphosphate as a cofactor.

It carries out the reaction D-glyceraldehyde 3-phosphate + pyruvate + H(+) = 1-deoxy-D-xylulose 5-phosphate + CO2. The protein operates within metabolic intermediate biosynthesis; 1-deoxy-D-xylulose 5-phosphate biosynthesis; 1-deoxy-D-xylulose 5-phosphate from D-glyceraldehyde 3-phosphate and pyruvate: step 1/1. Catalyzes the acyloin condensation reaction between C atoms 2 and 3 of pyruvate and glyceraldehyde 3-phosphate to yield 1-deoxy-D-xylulose-5-phosphate (DXP). This is 1-deoxy-D-xylulose-5-phosphate synthase from Bacillus cereus (strain AH187).